Here is a 56-residue protein sequence, read N- to C-terminus: Small ribosomal subunit protein uS14 (56 aa).

Residues cysteine 21, cysteine 24, cysteine 39, and cysteine 42 each contribute to the Zn(2+) site.

This sequence belongs to the universal ribosomal protein uS14 family. In terms of assembly, component of the 40S small ribosomal subunit. Requires Zn(2+) as cofactor.

It is found in the cytoplasm. The protein resides in the cytosol. It localises to the rough endoplasmic reticulum. This Drosophila melanogaster (Fruit fly) protein is Small ribosomal subunit protein uS14 (RpS29).